Consider the following 120-residue polypeptide: UPF0102 protein Caur_2698 (120 aa).

Belongs to the UPF0102 family.

This Chloroflexus aurantiacus (strain ATCC 29366 / DSM 635 / J-10-fl) protein is UPF0102 protein Caur_2698.